Consider the following 172-residue polypeptide: MEKAAKKEAVESLNGLFKTTSVAVVAHYSGLTVAQMQKLRSQMKLAGASVKVSKNRLAKIALEGTDVVAIGSLLKGPTVIATSNDPVAAPKVAVEFAKANEKFVILGGSMGTTVLNVDGVKALASLPSLDELRAKLVGLLVAPATKIAQLTTAPASKLARVVQAYASKDEAA.

This sequence belongs to the universal ribosomal protein uL10 family. Part of the ribosomal stalk of the 50S ribosomal subunit. The N-terminus interacts with L11 and the large rRNA to form the base of the stalk. The C-terminus forms an elongated spine to which L12 dimers bind in a sequential fashion forming a multimeric L10(L12)X complex.

Forms part of the ribosomal stalk, playing a central role in the interaction of the ribosome with GTP-bound translation factors. This is Large ribosomal subunit protein uL10 from Rhodopseudomonas palustris (strain BisA53).